Consider the following 35-residue polypeptide: GLFLNTVKDVAKDVAKDVAGKLLESLKCKITGCKS.

Cysteines 28 and 33 form a disulfide.

In terms of tissue distribution, expressed by the skin glands.

The protein localises to the secreted. Its function is as follows. Antibacterial activity against Gram-positive bacterium S.aureus. Shows no detectable hemolytic activity towards human erythrocytes. The protein is Ranatuerin-2SPa of Lithobates septentrionalis (Mink frog).